The primary structure comprises 411 residues: 1-deoxy-D-xylulose 5-phosphate reductoisomerase (411 aa).

Thr11, Gly12, Ser13, Ile14, and Asn124 together coordinate NADPH. Lys125 is a binding site for 1-deoxy-D-xylulose 5-phosphate. Glu126 contacts NADPH. Residue Asp150 coordinates Mn(2+). Positions 151, 152, 186, and 209 each coordinate 1-deoxy-D-xylulose 5-phosphate. Glu152 is a Mn(2+) binding site. Gly215 serves as a coordination point for NADPH. 4 residues coordinate 1-deoxy-D-xylulose 5-phosphate: Ser222, Asn227, Lys228, and Glu231. Position 231 (Glu231) interacts with Mn(2+).

This sequence belongs to the DXR family. Mg(2+) is required as a cofactor. It depends on Mn(2+) as a cofactor.

It catalyses the reaction 2-C-methyl-D-erythritol 4-phosphate + NADP(+) = 1-deoxy-D-xylulose 5-phosphate + NADPH + H(+). Its pathway is isoprenoid biosynthesis; isopentenyl diphosphate biosynthesis via DXP pathway; isopentenyl diphosphate from 1-deoxy-D-xylulose 5-phosphate: step 1/6. In terms of biological role, catalyzes the NADPH-dependent rearrangement and reduction of 1-deoxy-D-xylulose-5-phosphate (DXP) to 2-C-methyl-D-erythritol 4-phosphate (MEP). The polypeptide is 1-deoxy-D-xylulose 5-phosphate reductoisomerase (Psychrobacter sp. (strain PRwf-1)).